A 313-amino-acid chain; its full sequence is Methionyl-tRNA formyltransferase (313 aa).

113–116 (SLLP) is a (6S)-5,6,7,8-tetrahydrofolate binding site.

Belongs to the Fmt family.

It catalyses the reaction L-methionyl-tRNA(fMet) + (6R)-10-formyltetrahydrofolate = N-formyl-L-methionyl-tRNA(fMet) + (6S)-5,6,7,8-tetrahydrofolate + H(+). Attaches a formyl group to the free amino group of methionyl-tRNA(fMet). The formyl group appears to play a dual role in the initiator identity of N-formylmethionyl-tRNA by promoting its recognition by IF2 and preventing the misappropriation of this tRNA by the elongation apparatus. The sequence is that of Methionyl-tRNA formyltransferase from Francisella tularensis subsp. tularensis (strain FSC 198).